A 447-amino-acid polypeptide reads, in one-letter code: Tryptophan synthase beta chain (447 aa).

N6-(pyridoxal phosphate)lysine is present on lysine 92. The tract at residues 408–447 (GLAVKGGEQPKEFSDGPPLGKLAPSGGSAVREATSVGARK) is disordered.

Belongs to the TrpB family. Tetramer of two alpha and two beta chains. Requires pyridoxal 5'-phosphate as cofactor.

It carries out the reaction (1S,2R)-1-C-(indol-3-yl)glycerol 3-phosphate + L-serine = D-glyceraldehyde 3-phosphate + L-tryptophan + H2O. Its pathway is amino-acid biosynthesis; L-tryptophan biosynthesis; L-tryptophan from chorismate: step 5/5. In terms of biological role, the beta subunit is responsible for the synthesis of L-tryptophan from indole and L-serine. This chain is Tryptophan synthase beta chain, found in Polaromonas sp. (strain JS666 / ATCC BAA-500).